Here is a 304-residue protein sequence, read N- to C-terminus: ATP synthase gamma chain (304 aa).

This sequence belongs to the ATPase gamma chain family. F-type ATPases have 2 components, CF(1) - the catalytic core - and CF(0) - the membrane proton channel. CF(1) has five subunits: alpha(3), beta(3), gamma(1), delta(1), epsilon(1). CF(0) has three main subunits: a, b and c.

It is found in the cell membrane. Produces ATP from ADP in the presence of a proton gradient across the membrane. The gamma chain is believed to be important in regulating ATPase activity and the flow of protons through the CF(0) complex. This is ATP synthase gamma chain from Thermobifida fusca (strain YX).